Consider the following 205-residue polypeptide: Large ribosomal subunit protein uL3 (205 aa).

This sequence belongs to the universal ribosomal protein uL3 family. Part of the 50S ribosomal subunit. Forms a cluster with proteins L14 and L19.

Its function is as follows. One of the primary rRNA binding proteins, it binds directly near the 3'-end of the 23S rRNA, where it nucleates assembly of the 50S subunit. The sequence is that of Large ribosomal subunit protein uL3 from Thermosipho melanesiensis (strain DSM 12029 / CIP 104789 / BI429).